Reading from the N-terminus, the 133-residue chain is Small ribosomal subunit protein uS8 (133 aa).

Belongs to the universal ribosomal protein uS8 family. As to quaternary structure, part of the 30S ribosomal subunit. Contacts proteins S5 and S12.

One of the primary rRNA binding proteins, it binds directly to 16S rRNA central domain where it helps coordinate assembly of the platform of the 30S subunit. This Crocosphaera subtropica (strain ATCC 51142 / BH68) (Cyanothece sp. (strain ATCC 51142)) protein is Small ribosomal subunit protein uS8.